The primary structure comprises 275 residues: Type III pantothenate kinase (275 aa).

Residue 9-16 (DIGNTRLK) participates in ATP binding. Substrate-binding positions include Y114 and 121-124 (GVDR). The Proton acceptor role is filled by D123. T147 is an ATP binding site. A substrate-binding site is contributed by T209.

Belongs to the type III pantothenate kinase family. In terms of assembly, homodimer. Requires NH4(+) as cofactor. K(+) serves as cofactor.

The protein localises to the cytoplasm. The enzyme catalyses (R)-pantothenate + ATP = (R)-4'-phosphopantothenate + ADP + H(+). The protein operates within cofactor biosynthesis; coenzyme A biosynthesis; CoA from (R)-pantothenate: step 1/5. Functionally, catalyzes the phosphorylation of pantothenate (Pan), the first step in CoA biosynthesis. The sequence is that of Type III pantothenate kinase from Cupriavidus pinatubonensis (strain JMP 134 / LMG 1197) (Cupriavidus necator (strain JMP 134)).